The primary structure comprises 85 residues: RNA-binding protein Hfq (85 aa).

A Sm domain is found at 10-70 (DIFLNGARKN…ISTINPAKPL (61 aa)).

The protein belongs to the Hfq family. Homohexamer.

In terms of biological role, RNA chaperone that binds small regulatory RNA (sRNAs) and mRNAs to facilitate mRNA translational regulation in response to envelope stress, environmental stress and changes in metabolite concentrations. Also binds with high specificity to tRNAs. The polypeptide is RNA-binding protein Hfq (Clostridium botulinum (strain 657 / Type Ba4)).